Reading from the N-terminus, the 962-residue chain is UvrABC system protein A (962 aa).

38 to 45 contacts ATP; it reads GISGSGKS. ABC transporter domains are found at residues 319 to 597 and 617 to 944; these read WSKS…PDSL and PSGR…RFLR. Residue 649–656 participates in ATP binding; that stretch reads GVSGSGKS. The C4-type zinc-finger motif lies at 748-774; it reads CEACGGDGIIKIEMHFLADVYVPCEVC.

This sequence belongs to the ABC transporter superfamily. UvrA family. Forms a heterotetramer with UvrB during the search for lesions.

It is found in the cytoplasm. The UvrABC repair system catalyzes the recognition and processing of DNA lesions. UvrA is an ATPase and a DNA-binding protein. A damage recognition complex composed of 2 UvrA and 2 UvrB subunits scans DNA for abnormalities. When the presence of a lesion has been verified by UvrB, the UvrA molecules dissociate. This Methanothermobacter thermautotrophicus (strain ATCC 29096 / DSM 1053 / JCM 10044 / NBRC 100330 / Delta H) (Methanobacterium thermoautotrophicum) protein is UvrABC system protein A.